The following is a 344-amino-acid chain: Pre-mRNA-splicing factor cwc-21 (344 aa).

The segment covering 1 to 19 (MSDNVGLSTPRGSGTSGYV) has biased composition (polar residues). Disordered regions lie at residues 1 to 58 (MSDN…LEHD) and 98 to 344 (EMER…DNRD). The segment covering 38–58 (KDFDSLKHQPRQPDKGLLEHD) has biased composition (basic and acidic residues). In terms of domain architecture, CWF21 spans 55–98 (LEHDRKREVEVKVFELRDKLEEEGVEEDEIETRCDELRRKLLAE). The stretch at 69–105 (ELRDKLEEEGVEEDEIETRCDELRRKLLAEMERNQNS) forms a coiled coil. 3 stretches are compositionally biased toward basic and acidic residues: residues 120–167 (QVHE…REAN), 188–226 (RGGD…DRPP), and 238–277 (GGRD…DTGR). A compositionally biased stretch (basic residues) spans 288-306 (SRSRSRSRSYSRSRSPPRR). 2 stretches are compositionally biased toward basic and acidic residues: residues 307–316 (RAADSQDRSL) and 327–344 (SPDR…DNRD).

Belongs to the CWC21 family. In terms of assembly, associates with the NTC complex (or PRP19-associated complex). The NTC complex associates with the spliceosome after the release of the U1 and U4 snRNAs and forms the CWC spliceosome subcomplex reminiscent of a late-stage spliceosome.

Its subcellular location is the cytoplasm. The protein localises to the nucleus. Involved in pre-mRNA splicing. May function at or prior to the first catalytic step of splicing at the catalytic center of the spliceosome. May do so by stabilizing the catalytic center or the position of the RNA substrate. In Neurospora crassa (strain ATCC 24698 / 74-OR23-1A / CBS 708.71 / DSM 1257 / FGSC 987), this protein is Pre-mRNA-splicing factor cwc-21 (cwc-21).